The primary structure comprises 72 residues: Protein kish-A (72 aa).

The first 26 residues, 1-26 (MSAIFNFQSLLIVILLLICTCAYLRA), serve as a signal peptide directing secretion. The Extracellular portion of the chain corresponds to 27-53 (LVPNLLDKNKTGILGIFWKCARIGERK). The N-linked (GlcNAc...) asparagine glycan is linked to asparagine 35. Residues 54 to 71 (SPYVAVCCVVMAFSILFM) form a helical membrane-spanning segment. Position 72 (glutamine 72) is a topological domain, cytoplasmic.

Belongs to the KISH family.

It localises to the golgi apparatus membrane. Involved in the early part of the secretory pathway. In Xenopus tropicalis (Western clawed frog), this protein is Protein kish-A (tmem167a).